The primary structure comprises 319 residues: ATP-dependent 6-phosphofructokinase (319 aa).

Gly11 is an ATP binding site. 21-25 (RAVVR) is an ADP binding site. ATP contacts are provided by residues 72-73 (RY) and 102-105 (GDGS). Mg(2+) is bound at residue Asp103. Residue 125–127 (TID) coordinates substrate. The Proton acceptor role is filled by Asp127. Residue Arg154 participates in ADP binding. Residues Arg162 and 169 to 171 (MGR) contribute to the substrate site. ADP is bound by residues 185–187 (GAE), Arg211, and 213–215 (KKH). Substrate-binding positions include Glu222, Arg243, and 249–252 (HVQR).

The protein belongs to the phosphofructokinase type A (PFKA) family. ATP-dependent PFK group I subfamily. Prokaryotic clade 'B1' sub-subfamily. As to quaternary structure, homotetramer. It depends on Mg(2+) as a cofactor.

The protein resides in the cytoplasm. The catalysed reaction is beta-D-fructose 6-phosphate + ATP = beta-D-fructose 1,6-bisphosphate + ADP + H(+). The protein operates within carbohydrate degradation; glycolysis; D-glyceraldehyde 3-phosphate and glycerone phosphate from D-glucose: step 3/4. Allosterically activated by ADP and other diphosphonucleosides, and allosterically inhibited by phosphoenolpyruvate. Catalyzes the phosphorylation of D-fructose 6-phosphate to fructose 1,6-bisphosphate by ATP, the first committing step of glycolysis. This chain is ATP-dependent 6-phosphofructokinase, found in Listeria welshimeri serovar 6b (strain ATCC 35897 / DSM 20650 / CCUG 15529 / CIP 8149 / NCTC 11857 / SLCC 5334 / V8).